We begin with the raw amino-acid sequence, 98 residues long: NADH-ubiquinone oxidoreductase chain 4L (98 aa).

3 helical membrane passes run 1–21 (MSMVYINIFLAFTLSFMGLLI), 30–50 (LLCLEGMMLSLFVMMTVTILT), and 61–81 (IILLVFAACEAALGLSLLVMI).

The protein belongs to the complex I subunit 4L family. As to quaternary structure, core subunit of respiratory chain NADH dehydrogenase (Complex I) which is composed of 45 different subunits.

It is found in the mitochondrion inner membrane. The catalysed reaction is a ubiquinone + NADH + 5 H(+)(in) = a ubiquinol + NAD(+) + 4 H(+)(out). Functionally, core subunit of the mitochondrial membrane respiratory chain NADH dehydrogenase (Complex I) which catalyzes electron transfer from NADH through the respiratory chain, using ubiquinone as an electron acceptor. Part of the enzyme membrane arm which is embedded in the lipid bilayer and involved in proton translocation. This Gulo gulo (Wolverine) protein is NADH-ubiquinone oxidoreductase chain 4L (MT-ND4L).